The chain runs to 209 residues: Imidazoleglycerol-phosphate dehydratase (209 aa).

The disordered stretch occupies residues 1 to 23; the sequence is MQLSDRPLTAPGTAPRQATVSRR.

Belongs to the imidazoleglycerol-phosphate dehydratase family.

The protein resides in the cytoplasm. The catalysed reaction is D-erythro-1-(imidazol-4-yl)glycerol 3-phosphate = 3-(imidazol-4-yl)-2-oxopropyl phosphate + H2O. The protein operates within amino-acid biosynthesis; L-histidine biosynthesis; L-histidine from 5-phospho-alpha-D-ribose 1-diphosphate: step 6/9. The sequence is that of Imidazoleglycerol-phosphate dehydratase from Synechococcus elongatus (strain ATCC 33912 / PCC 7942 / FACHB-805) (Anacystis nidulans R2).